The primary structure comprises 610 residues: Phosphoenolpyruvate carboxykinase [GTP] (610 aa).

Substrate contacts are provided by residues arginine 82 and tyrosine 221–glycine 223. Mn(2+) is bound by residues lysine 230 and histidine 250. Serine 272 provides a ligand contact to substrate. Alanine 273 to asparagine 278 serves as a coordination point for GTP. Cysteine 274 is a catalytic residue. Mn(2+) is bound at residue aspartate 297. Residue asparagine 387–arginine 389 participates in substrate binding. GTP-binding positions include arginine 389, arginine 420, and phenylalanine 515–asparagine 518.

Belongs to the phosphoenolpyruvate carboxykinase [GTP] family. In terms of assembly, monomer. It depends on Mn(2+) as a cofactor.

It localises to the cytoplasm. The enzyme catalyses oxaloacetate + GTP = phosphoenolpyruvate + GDP + CO2. Its pathway is carbohydrate biosynthesis; gluconeogenesis. Its function is as follows. Involved in the gluconeogenesis. Catalyzes the conversion of oxaloacetate (OAA) to phosphoenolpyruvate (PEP), the rate-limiting step in the metabolic pathway that produces glucose from lactate and other precursors derived from the citric acid cycle. The protein is Phosphoenolpyruvate carboxykinase [GTP] of Corynebacterium glutamicum (strain ATCC 13032 / DSM 20300 / JCM 1318 / BCRC 11384 / CCUG 27702 / LMG 3730 / NBRC 12168 / NCIMB 10025 / NRRL B-2784 / 534).